A 429-amino-acid chain; its full sequence is Probable M18 family aminopeptidase 2 (429 aa).

Positions 82, 156, and 401 each coordinate Zn(2+).

It belongs to the peptidase M18 family. Zn(2+) serves as cofactor.

The protein is Probable M18 family aminopeptidase 2 of Pseudomonas putida (strain ATCC 47054 / DSM 6125 / CFBP 8728 / NCIMB 11950 / KT2440).